A 421-amino-acid polypeptide reads, in one-letter code: Gamma-glutamyl phosphate reductase (421 aa).

Belongs to the gamma-glutamyl phosphate reductase family.

It is found in the cytoplasm. The enzyme catalyses L-glutamate 5-semialdehyde + phosphate + NADP(+) = L-glutamyl 5-phosphate + NADPH + H(+). Its pathway is amino-acid biosynthesis; L-proline biosynthesis; L-glutamate 5-semialdehyde from L-glutamate: step 2/2. In terms of biological role, catalyzes the NADPH-dependent reduction of L-glutamate 5-phosphate into L-glutamate 5-semialdehyde and phosphate. The product spontaneously undergoes cyclization to form 1-pyrroline-5-carboxylate. The protein is Gamma-glutamyl phosphate reductase of Acinetobacter baylyi (strain ATCC 33305 / BD413 / ADP1).